The chain runs to 439 residues: Adenylosuccinate synthetase (439 aa).

Residues 25-31 (GDEGKGK) and 53-55 (GHT) each bind GTP. The Proton acceptor role is filled by D26. 2 residues coordinate Mg(2+): D26 and G53. IMP is bound by residues 26-29 (DEGK), 51-54 (NAGH), T146, R160, N237, T252, and R316. Residue H54 is the Proton donor of the active site. Substrate is bound at residue 312–318 (VTTGRRR). GTP contacts are provided by residues R318, 344-346 (KLD), and 426-428 (GVG).

The protein belongs to the adenylosuccinate synthetase family. As to quaternary structure, homodimer. Mg(2+) is required as a cofactor.

The protein localises to the cytoplasm. It catalyses the reaction IMP + L-aspartate + GTP = N(6)-(1,2-dicarboxyethyl)-AMP + GDP + phosphate + 2 H(+). Its pathway is purine metabolism; AMP biosynthesis via de novo pathway; AMP from IMP: step 1/2. In terms of biological role, plays an important role in the de novo pathway and in the salvage pathway of purine nucleotide biosynthesis. Catalyzes the first committed step in the biosynthesis of AMP from IMP. This is Adenylosuccinate synthetase from Mycosarcoma maydis (Corn smut fungus).